The following is a 1118-amino-acid chain: MKKNILKILMDSYSKESKIQTVRRVTSVSLLAVYLTMNTSSLVLAKPIENTNDTSIKNVEKLRNAPNEENSKKVEDSKNDKVEHVKNIEEAKVEQVAPEVKSKSTLRSASIANTNSEKYDFEYLNGLSYTELTNLIKNIKWNQINGLFNYSTGSQKFFGDKNRVQAIINALQESGRTYTANDMKGIETFTEVLRAGFYLGYYNDGLSYLNDRNFQDKCIPAMIAIQKNPNFKLGTAVQDEVITSLGKLIGNASANAEVVNNCVPVLKQFRENLNQYAPDYVKGTAVNELIKGIEFDFSGAAYEKDVKTMPWYGKIDPFINELKALGLYGNITSATEWASDVGIYYLSKFGLYSTNRNDIVQSLEKAVDMYKYGKIAFVAMERITWDYDGIGSNGKKVDHDKFLDDAEKHYLPKTYTFDNGTFIIRAGDKVSEEKIKRLYWASREVKSQFHRVVGNDKALEVGNADDVLTMKIFNSPEEYKFNTNINGVSTDNGGLYIEPRGTFYTYERTPQQSIFSLEELFRHEYTHYLQARYLVDGLWGQGPFYEKNRLTWFDEGTAEFFAGSTRTSGVLPRKSILGYLAKDKVDHRYSLKKTLNSGYDDSDWMFYNYGFAVAHYLYEKDMPTFIKMNKAILNTDVKSYDEIIKKLSDDANKNTEYQNHIQELADKYQGAGIPLVSDDYLKDHGYKKASEVYSEISKAASLTNTSVTAEKSQYFNTFTLRGTYTGETSKGEFKDWDEMSKKLDGTLESLAKNSWSGYKTLTAYFTNYRVTSDNKVQYDVVFHGVLTDNADISNNKAPIAKVTGPSTGAVGRNIEFSGKDSKDEDGKIVSYDWDFGDGATSRGKNSVHAYKKAGTYNVTLKVTDDKGATATESFTIEIKNEDTTTPITKEMEPNDDIKEANGPIVEGVTVKGDLNGSDDADTFYFDVKEDGDVTIELPYSGSSNFTWLVYKEGDDQNHIASGIDKNNSKVGTFKSTKGRHYVFIYKHDSASNISYSLNIKGLGNEKLKEKENNDSSDKATVIPNFNTTMQGSLLGDDSRDYYSFEVKEEGEVNIELDKKDEFGVTWTLHPESNINDRITYGQVDGNKVSNKVKLRPGKYYLLVYKYSGSGNYELRVNK.

A signal peptide spans 1 to 45; it reads MKKNILKILMDSYSKESKIQTVRRVTSVSLLAVYLTMNTSSLVLA. Residues 46 to 110 constitute a propeptide that is removed on maturation; it reads KPIENTNDTS…KSKSTLRSAS (65 aa). Residues 111-786 are S1 metalloprotease domain, degrades both FALGPA (furylacryloyl-Leu-Gly-Pro-Ala) and type I collagen; that stretch reads IANTNSEKYD…QYDVVFHGVL (676 aa). The tract at residues 119-388 is activator domain required for full activity on collagen; sequence YDFEYLNGLS…AMERITWDYD (270 aa). Positions 389 to 670 are catalytic subdomain; the sequence is GIGSNGKKVD…IQELADKYQG (282 aa). The degrades soluble FALGPA peptide (furylacryloyl-Leu-Gly-Pro-Ala) but not type I collagen stretch occupies residues 396–1118; the sequence is KVDHDKFLDD…SGNYELRVNK (723 aa). Glu498 contributes to the Ca(2+) binding site. His523 contributes to the Zn(2+) binding site. The active site involves Glu524. His527 contributes to the Zn(2+) binding site. Residues Ala531, Val535, and Gly537 each contribute to the Ca(2+) site. Glu555 serves as a coordination point for Zn(2+). The tract at residues 679 to 790 is helper subdomain; sequence DYLKDHGYKK…VFHGVLTDNA (112 aa). The interval 787-882 is S2 domain; sequence TDNADISNNK…SFTIEIKNED (96 aa). The Ca(2+) site is built by Asn795, Lys796, Asp823, Asp825, Asp864, Glu890, Glu892, Asn894, Asp913, Asp918, Ala920, Asp921, Glu1009, Glu1011, Asn1013, Asp1014, Ser1032, Asp1037, Arg1039, and Asp1040. The PKD domain maps to 797–885; the sequence is APIAKVTGPS…IEIKNEDTTT (89 aa). The tract at residues 886–1003 is S3a collagen-binding domain; that stretch reads PITKEMEPND…SYSLNIKGLG (118 aa). Positions 1008 to 1118 are S3b collagen-binding domain; sequence KEKENNDSSD…SGNYELRVNK (111 aa). The tract at residues 1102–1106 is collagen-binding; that stretch reads LVYKY.

Belongs to the peptidase M9B family. Collagenase subfamily. The cofactor is Ca(2+). It depends on Zn(2+) as a cofactor. In terms of processing, upon purification gives 67 kDa, 78 kDa, 82 kDa and 116 kDa (full-length) proteins all of which have the same N-terminus; only the longest form digests insoluble collagen. At least 2 in vivo isolated forms (C1b and C1c) are missing the second collagen-binding domain, ending on Lys-1006 and Lys-1018 respectively.

It is found in the secreted. The catalysed reaction is Digestion of native collagen in the triple helical region at Xaa-|-Gly bonds. With synthetic peptides, a preference is shown for Gly at P3 and P1', Pro and Ala at P2 and P2', and hydroxyproline, Ala or Arg at P3'.. With respect to regulation, inhibited by 1-10-phenanthroline. Inhibited by peptidomimetic isoamyl-phosphonyl-Gly-Pro-Ala, which binds to Zn(2+). Inhibited by broad-spectrum zinc metalloprotease inhibitor batimastat. N-aryl mercaptoacetamide-based inhibitors have been isolated that act on clostridial collagenases with submicromolar affinity while having negligibile activity on human collagenases. In terms of biological role, clostridial collagenases are among the most efficient degraders of eukaryotic collagen known; saprophytes use collagen as a carbon source while pathogens additionally digest collagen to aid in host colonization. Has both tripeptidylcarboxypeptidase on Gly-X-Y and endopeptidase activities; the endopeptidase cuts within the triple helix region of collagen while tripeptidylcarboxypeptidase successively digests the exposed ends, thus clostridial collagenases can digest large sections of collagen. Active on soluble type I collagen, insoluble collagen, azocoll, soluble PZ-peptide (all collagenase substrates) and gelatin. The full-length protein has collagenase activity, while the in vivo derived C-terminally truncated shorter versions only act on gelatin. In vitro digestion of soluble calf skin collagen fibrils requires both ColG and ColH; ColG forms missing the second collagen-binding domain are also synergistic with ColH, although their overall efficiency is decreased. The activator domain (residues 119-388) and catalytic subdomain (389-670) open and close around substrate using a Gly-rich hinge (387-397), allowing digestion when the protein is closed. Binding of collagen requires Ca(2+) and is inhibited by EGTA; the collagen-binding domain (CBD, S3a plus S3b) specifically recognizes the triple-helical conformation made by 3 collagen protein chains in the triple-helical region. Isolated CBD (S3a plus S3b) binds collagen fibrils and sheets of many tissues. This Hathewaya histolytica (Clostridium histolyticum) protein is Collagenase ColG.